The following is a 666-amino-acid chain: uncharacterized protein (666 aa).

The RNB domain maps to 263-553 (RFDLTTLKTY…THFQMKAYLR (291 aa)).

It belongs to the RNR ribonuclease family.

This is an uncharacterized protein from Synechocystis sp. (strain ATCC 27184 / PCC 6803 / Kazusa).